The primary structure comprises 715 residues: Polyribonucleotide nucleotidyltransferase (715 aa).

Positions 498 and 504 each coordinate Mg(2+). In terms of domain architecture, KH spans 565–625; sequence PKVCMMQIKP…ETVKKTVAFI (61 aa). The S1 motif domain maps to 635–709; sequence GTCYQASILR…RIDFLLLPKK (75 aa).

The protein belongs to the polyribonucleotide nucleotidyltransferase family. The cofactor is Mg(2+).

It is found in the cytoplasm. The enzyme catalyses RNA(n+1) + phosphate = RNA(n) + a ribonucleoside 5'-diphosphate. Involved in mRNA degradation. Catalyzes the phosphorolysis of single-stranded polyribonucleotides processively in the 3'- to 5'-direction. The protein is Polyribonucleotide nucleotidyltransferase of Aster yellows witches'-broom phytoplasma (strain AYWB).